The following is a 151-amino-acid chain: Deoxyuridine 5'-triphosphate nucleotidohydrolase (151 aa).

Substrate is bound by residues 70–72 (RSG), asparagine 83, 87–89 (LID), and methionine 97.

It belongs to the dUTPase family. As to quaternary structure, homotrimer. Requires Mg(2+) as cofactor.

It catalyses the reaction dUTP + H2O = dUMP + diphosphate + H(+). It functions in the pathway pyrimidine metabolism; dUMP biosynthesis; dUMP from dCTP (dUTP route): step 2/2. This enzyme is involved in nucleotide metabolism: it produces dUMP, the immediate precursor of thymidine nucleotides and it decreases the intracellular concentration of dUTP so that uracil cannot be incorporated into DNA. This is Deoxyuridine 5'-triphosphate nucleotidohydrolase from Escherichia coli O45:K1 (strain S88 / ExPEC).